The sequence spans 213 residues: ATP phosphoribosyltransferase (213 aa).

Belongs to the ATP phosphoribosyltransferase family. Short subfamily. As to quaternary structure, heteromultimer composed of HisG and HisZ subunits.

The protein localises to the cytoplasm. The catalysed reaction is 1-(5-phospho-beta-D-ribosyl)-ATP + diphosphate = 5-phospho-alpha-D-ribose 1-diphosphate + ATP. It participates in amino-acid biosynthesis; L-histidine biosynthesis; L-histidine from 5-phospho-alpha-D-ribose 1-diphosphate: step 1/9. In terms of biological role, catalyzes the condensation of ATP and 5-phosphoribose 1-diphosphate to form N'-(5'-phosphoribosyl)-ATP (PR-ATP). Has a crucial role in the pathway because the rate of histidine biosynthesis seems to be controlled primarily by regulation of HisG enzymatic activity. This chain is ATP phosphoribosyltransferase, found in Anoxybacillus flavithermus (strain DSM 21510 / WK1).